An 86-amino-acid chain; its full sequence is High affinity immunoglobulin epsilon receptor subunit gamma (86 aa).

The N-terminal stretch at 1-18 (MIPAVVLLLLLLVEQAAA) is a signal peptide. Topologically, residues 19–23 (LGEPQ) are extracellular. A helical transmembrane segment spans residues 24 to 44 (LCYILDAILFLYGIVLTLLYC). Topologically, residues 45-86 (RLKLQVRKAAIDSYEKSDGVYTGLSTRNQETYETLKHEKPPQ) are cytoplasmic. An ITAM domain is found at 54–82 (AIDSYEKSDGVYTGLSTRNQETYETLKHE). Tyrosine 65 bears the Phosphotyrosine mark. Serine 69 is subject to Phosphoserine. Tyrosine 76 carries the phosphotyrosine modification. Residue threonine 78 is modified to Phosphothreonine.

It belongs to the CD3Z/FCER1G family. In terms of assembly, igE Fc receptor is a tetramer of an alpha chain, a beta chain, and two disulfide linked gamma chains. Associates with FCGR1A; forms a functional signaling complex. The signaling subunit of immunoglobulin gamma (IgG) Fc receptor complex. As a homodimer or a heterodimer of CD247 and FCER1G, associates with the ligand binding subunit FCGR3A to form a functional receptor complex. Associates with CLEC6A. Interacts with CLEC4E. Interacts (via ITAM domain) with SYK (via SH2 domains); activates SYK, enabling integrin-mediated activation of neutrophils and macrophages. Interacts with common beta chain of interleukin 3 receptor CSF2RB and recruits SYK in response to IL3 stimulation; this interaction is direct. Interacts with CD300LH; the interaction may be indirect. Interacts with CD300LD. Interacts with TARM1.

The protein resides in the cell membrane. Adapter protein containing an immunoreceptor tyrosine-based activation motif (ITAM) that transduces activation signals from various immunoreceptors. As a component of the high-affinity immunoglobulin E (IgE) receptor, mediates allergic inflammatory signaling in mast cells. As a constitutive component of interleukin-3 receptor complex, selectively mediates interleukin 4/IL4 production b basophils priming T-cells toward effector T-helper 2 subset. Associates with pattern recognition receptors CLEC4D and CLEC4E to form a functional signaling complex in myeloid cells. Binding of mycobacterial trehalose 6,6'-dimycolate (TDM) to this receptor complex leads to phosphorylation of ITAM, triggering activation of SYK, CARD9 and NF-kappa-B, consequently driving maturation of antigen-presenting cells and shaping antigen-specific priming of T-cells toward effector T-helper 1 and T-helper 17 cell subtypes. May function cooperatively with other activating receptors. Functionally linked to integrin beta-2/ITGB2-mediated neutrophil activation. Also involved in integrin alpha-2/ITGA2-mediated platelet activation. In Sus scrofa (Pig), this protein is High affinity immunoglobulin epsilon receptor subunit gamma (FCER1G).